The following is a 148-amino-acid chain: Protein MGF 360-18R (148 aa).

This sequence belongs to the asfivirus MGF 360 family.

Functionally, plays a role in virus cell tropism, and may be required for efficient virus replication in macrophages. This African swine fever virus (strain Badajoz 1971 Vero-adapted) (Ba71V) protein is Protein MGF 360-18R.